Reading from the N-terminus, the 566-residue chain is Chondroitin sulfate proteoglycan 5 (566 aa).

A signal peptide spans 1 to 30 (MGRAGGGGPDWGPPPVLLLLGVTLVLTAGA). Residues 31–423 (VPARETGSAI…SIITDFQVMC (393 aa)) are Extracellular-facing. O-linked (Xyl...) (chondroitin sulfate) serine glycosylation is present at serine 38. Positions 56–93 (ANDTREEAGLPAAGEDETSWTERGSEMAAVGPGVGPEE) are disordered. Residue asparagine 57 is glycosylated (N-linked (GlcNAc...) asparagine). Residue threonine 76 is glycosylated (O-linked (GalNAc...) threonine). Serine 123 is a glycosylation site (O-linked (Xyl...) (chondroitin sulfate) serine). O-linked (GalNAc...) threonine glycosylation is present at threonine 132. 3 disordered regions span residues 137 to 173 (DEAL…GPEL), 218 to 249 (DSEG…TPSW), and 263 to 327 (ESDF…PPQH). A glycan (O-linked (GalNAc...) serine) is linked at serine 143. O-linked (GalNAc...) threonine glycans are attached at residues threonine 144, threonine 153, and threonine 155. Residues serine 156 and serine 160 are each glycosylated (O-linked (GalNAc...) serine). The segment covering 163–173 (VHDKPSVGPEL) has biased composition (basic and acidic residues). Threonine 235 carries an O-linked (GalNAc...) threonine glycan. The tract at residues 265–301 (DFYPTTSFYDDLEEEEEEEEDKDTVGGGDLEDENDLL) is interaction with TNC and TNR. The segment covering 274–286 (DDLEEEEEEEEDK) has biased composition (acidic residues). Asparagine 355 and asparagine 367 each carry an N-linked (GlcNAc...) asparagine glycan. The EGF-like domain occupies 371–413 (RSVCDLFPSYCHNGGQCYLVENIGAFCRCNTQDYIWHKGMRCE). Intrachain disulfides connect cysteine 374-cysteine 387, cysteine 381-cysteine 397, and cysteine 399-cysteine 412. Phosphoserine occurs at positions 394 and 396. A Phosphothreonine modification is found at cysteine 397. A helical transmembrane segment spans residues 424–444 (VAVGSAALVLLLLFMMTVFFA). The tract at residues 442–460 (FFAKKLYLLKTENTKLRRT) is interaction with GOPC. Residues 445–566 (KKLYLLKTEN…GVNCLQNNLT (122 aa)) are Cytoplasmic-facing. Phosphoserine occurs at positions 467, 475, and 477. Threonine 478 bears the Phosphothreonine mark. Serine 483 and serine 543 each carry phosphoserine. The tract at residues 531-566 (KEEESFNIQNSMSPKLEGGKGDQDDLGVNCLQNNLT) is disordered.

In terms of assembly, binds TNR and probably TNC. Interacts with ERBB3 and GOPC. Interacts with MDK; this interaction is independent of the presence of chondroitin sulfate chains and promotes elongation of oligodendroglial precursor-like cells. Post-translationally, N-glycosylated. O-glycosylated; contains chondroitin sulfate glycans. Part-time proteoglycan, expressed in part as a proteoglycan exhibiting chondroitin sulfate glycans and in part as a non-proteoglycan form. The relative amount of both forms depends on tissues and tissue maturation. In the cerebellum the 2 forms coexist while in the cerebrum the proteoglycan form is predominant. In terms of processing, phosphorylated; in intracellular and extracellular parts. In terms of tissue distribution, expressed in olfactory bulb, hippocampus, brain stem, spinal cord, cerebrum and cerebellum. Expressed by Purkinje cells in the cerebellum (at protein level). Expressed in immature and mature cerebellum (isoform 1, isoform 2 and isoform 3).

The protein resides in the cell membrane. It localises to the synaptic cell membrane. Its subcellular location is the endoplasmic reticulum membrane. The protein localises to the golgi apparatus membrane. It is found in the cell surface. The protein resides in the secreted. May function as a growth and differentiation factor involved in neuritogenesis. May induce ERBB3 activation. The protein is Chondroitin sulfate proteoglycan 5 (Cspg5) of Mus musculus (Mouse).